The chain runs to 139 residues: Protein AC53 (139 aa).

The protein localises to the host cytoplasm. The protein resides in the host nucleus. In terms of biological role, plays a role in nucleocapsid assembly. This chain is Protein AC53 (AC53), found in Lepidoptera (butterflies and moths).